Consider the following 371-residue polypeptide: MSTNNSDIRVVVGMSGGVDSSVTAHILKEQGYDVIGIFMKNWDDTDEFGVCTATEDYDDVIRVANQIGIPYYAVNFEKEYWDKVFTYFLDEYKLGRTPNPDVMCNKEIKFKAFLEHAESLGADYVATGHYAQVKKVGDEIELLRGVDNNKDQTYFLNQLSQDQLKKVMFPLGGMEKTEVREIAKKAGLATANKKDSTGICFIGERNFKQFLSEYLPAQPGEMRTLNGEVLGKHDGLMYYTIGQRHGLGIGGDGEPWFVVGKDLKENVLFVEQGFHHETLYSDSLIATDISFTTNAEKPKTIECTAKFRYRQTDTKVTVHLREDGTAEVVFADPVRAITPGQAVVFYDGDICLGGGTIDTVWKNGAKLDYVG.

ATP contacts are provided by residues 13-20 and methionine 39; that span reads GMSGGVDS. An interaction with target base in tRNA region spans residues 99 to 101; that stretch reads NPD. Catalysis depends on cysteine 104, which acts as the Nucleophile. An intrachain disulfide couples cysteine 104 to cysteine 200. Glycine 128 lines the ATP pocket. Residues 150 to 152 are interaction with tRNA; that stretch reads KDQ. Cysteine 200 acts as the Cysteine persulfide intermediate in catalysis. An interaction with tRNA region spans residues 308–309; the sequence is RY.

This sequence belongs to the MnmA/TRMU family.

The protein resides in the cytoplasm. The catalysed reaction is S-sulfanyl-L-cysteinyl-[protein] + uridine(34) in tRNA + AH2 + ATP = 2-thiouridine(34) in tRNA + L-cysteinyl-[protein] + A + AMP + diphosphate + H(+). Its function is as follows. Catalyzes the 2-thiolation of uridine at the wobble position (U34) of tRNA, leading to the formation of s(2)U34. The polypeptide is tRNA-specific 2-thiouridylase MnmA (Listeria monocytogenes serotype 4b (strain CLIP80459)).